Consider the following 436-residue polypeptide: Coiled-coil domain-containing protein 71 (436 aa).

Residues 95 to 119 (ATSLPARAPQTAKSVPTGQTTLLPV) are disordered. Residues 105-116 (TAKSVPTGQTTL) show a composition bias toward polar residues. Residue S129 is modified to Phosphoserine. Disordered regions lie at residues 210-258 (LRKG…MKGR) and 314-405 (ALRG…KVDR). Residues 264–334 (KTVRGKAPRT…QAKAKAARTK (71 aa)) are a coiled coil. Residues 329–340 (KAARTKHKKRPK) are compositionally biased toward basic residues. The segment covering 344-359 (QTRTGRTSLKNSSETV) has biased composition (polar residues). Residues 373–386 (PPKKRARCVPRSKA) are compositionally biased toward basic residues.

This Rattus norvegicus (Rat) protein is Coiled-coil domain-containing protein 71 (Ccdc71).